The primary structure comprises 548 residues: Eukaryotic translation initiation factor 3 subunit D (548 aa).

K53 bears the N6-acetyllysine mark. S161 is modified (phosphoserine). The RNA gate stretch occupies residues 285–299 (DFDLPTVSETANEPP). Disordered stretches follow at residues 288 to 309 (LPTVSETANEPPQDEGNSFNSP) and 523 to 548 (PDGTFSSDEDEEEEEEEEEEEEEEET). Polar residues predominate over residues 291 to 309 (VSETANEPPQDEGNSFNSP). A phosphoserine mark is found at S528 and S529. Residues 529–548 (SDEDEEEEEEEEEEEEEEET) are compositionally biased toward acidic residues.

This sequence belongs to the eIF-3 subunit D family. In terms of assembly, component of the eukaryotic translation initiation factor 3 (eIF-3) complex, which is composed of 13 subunits: EIF3A, EIF3B, EIF3C, EIF3D, EIF3E, EIF3F, EIF3G, EIF3H, EIF3I, EIF3J, EIF3K, EIF3L and EIF3M. The eIF-3 complex appears to include 3 stable modules: module A is composed of EIF3A, EIF3B, EIF3G and EIF3I; module B is composed of EIF3F, EIF3H, and EIF3M; and module C is composed of EIF3C, EIF3D, EIF3E, EIF3K and EIF3L. EIF3C of module C binds EIF3B of module A and EIF3H of module B, thereby linking the three modules. EIF3J is a labile subunit that binds to the eIF-3 complex via EIF3B. The eIF-3 complex interacts with RPS6KB1 under conditions of nutrient depletion. Mitogenic stimulation leads to binding and activation of a complex composed of MTOR and RPTOR, leading to phosphorylation and release of RPS6KB1 and binding of EIF4B to eIF-3.

The protein localises to the cytoplasm. In terms of biological role, mRNA cap-binding component of the eukaryotic translation initiation factor 3 (eIF-3) complex, a complex required for several steps in the initiation of protein synthesis of a specialized repertoire of mRNAs. The eIF-3 complex associates with the 40S ribosome and facilitates the recruitment of eIF-1, eIF-1A, eIF-2:GTP:methionyl-tRNAi and eIF-5 to form the 43S pre-initiation complex (43S PIC). The eIF-3 complex stimulates mRNA recruitment to the 43S PIC and scanning of the mRNA for AUG recognition. The eIF-3 complex is also required for disassembly and recycling of post-termination ribosomal complexes and subsequently prevents premature joining of the 40S and 60S ribosomal subunits prior to initiation. The eIF-3 complex specifically targets and initiates translation of a subset of mRNAs involved in cell proliferation, including cell cycling, differentiation and apoptosis, and uses different modes of RNA stem-loop binding to exert either translational activation or repression. In the eIF-3 complex, EIF3D specifically recognizes and binds the 7-methylguanosine cap of a subset of mRNAs. In Pongo abelii (Sumatran orangutan), this protein is Eukaryotic translation initiation factor 3 subunit D.